Consider the following 100-residue polypeptide: Non-histone chromosomal protein HMG-14 (100 aa).

The tract at residues 1–100 (MPKRKVSSAE…EAGEKEAKSD (100 aa)) is disordered. Position 7 is an ADP-ribosylserine (Ser-7). A Phosphoserine modification is found at Ser-8. Residue Lys-14 is modified to N6-acetyllysine. At Ser-21 the chain carries Phosphoserine; by RPS6KA5. ADP-ribosylserine; alternate is present on Ser-25. A Phosphoserine; alternate; by RPS6KA5 modification is found at Ser-25. At Lys-27 the chain carries N6-acetyllysine. Basic and acidic residues-rich tracts occupy residues 30–50 (AKVE…DKKV) and 69–85 (ETKE…KTEE). Phosphothreonine is present on Thr-81. N6-acetyllysine is present on Lys-82. A phosphoserine mark is found at Ser-86, Ser-89, and Ser-99.

In terms of assembly, interacts with transcriptional regulator SEHBP. In terms of processing, phosphorylation on Ser-21 and Ser-25 weakens binding to nucleosomes and increases the rate of H3 phosphorylation. Phosphorylation favors cytoplasmic localization.

The protein resides in the nucleus. The protein localises to the cytoplasm. Functionally, binds to the inner side of the nucleosomal DNA thus altering the interaction between the DNA and the histone octamer. May be involved in the process which maintains transcribable genes in a unique chromatin conformation. Inhibits the phosphorylation of nucleosomal histones H3 and H2A by RPS6KA5/MSK1 and RPS6KA3/RSK2. The sequence is that of Non-histone chromosomal protein HMG-14 (HMGN1) from Homo sapiens (Human).